Here is a 289-residue protein sequence, read N- to C-terminus: Homeobox protein Nkx-2.6 (289 aa).

2 disordered regions span residues 75–125 (GSNP…PQRK) and 259–289 (TPLA…VTAW). The homeobox DNA-binding region spans 123 to 182 (QRKSRVLFSQAQVLALERRFKQQRYLTAPEREHLASALQLTSTQVKIWFQNRRYKSKSQR). A compositionally biased stretch (polar residues) spans 261-274 (LASSGFSPGGQSAA).

It belongs to the NK-2 homeobox family. As to expression, not detected in any neonate or adult tissues.

The protein localises to the nucleus. Its function is as follows. Acts as a transcriptional activator. In conjunction with NKX2-5, may play a role in both pharyngeal and cardiac embryonic development. In Mus musculus (Mouse), this protein is Homeobox protein Nkx-2.6 (Nkx2-6).